The primary structure comprises 413 residues: Protein SLX4IP (413 aa).

Residues K61, K79, K167, K176, and K236 each participate in a glycyl lysine isopeptide (Lys-Gly) (interchain with G-Cter in SUMO2) cross-link. Disordered stretches follow at residues 172–193 (RTKS…VGRS) and 228–300 (SHQE…GSVE). Over residues 238-254 (ENVSQTQPGDTRSQQQL) the composition is skewed to polar residues. Residues K288, K344, and K353 each participate in a glycyl lysine isopeptide (Lys-Gly) (interchain with G-Cter in SUMO2) cross-link. The interval 363–413 (SSRHLVTNNPGQAQQSDSAAITEQLATDQGGPSKKRKKLQSYNRGCSGKKN) is disordered. The segment covering 364–389 (SRHLVTNNPGQAQQSDSAAITEQLAT) has biased composition (polar residues). T389 carries the phosphothreonine modification. Residue K396 forms a Glycyl lysine isopeptide (Lys-Gly) (interchain with G-Cter in SUMO2) linkage.

Belongs to the SLX4IP family. As to quaternary structure, interacts with SLX4/BTBD12; subunit of different structure-specific endonucleases.

The protein is Protein SLX4IP (Slx4ip) of Mus musculus (Mouse).